Reading from the N-terminus, the 326-residue chain is N-acetyl-gamma-glutamyl-phosphate reductase (326 aa).

Cys-155 is an active-site residue.

The protein belongs to the NAGSA dehydrogenase family. Type 1 subfamily.

The protein localises to the cytoplasm. The catalysed reaction is N-acetyl-L-glutamate 5-semialdehyde + phosphate + NADP(+) = N-acetyl-L-glutamyl 5-phosphate + NADPH + H(+). It participates in amino-acid biosynthesis; L-arginine biosynthesis; N(2)-acetyl-L-ornithine from L-glutamate: step 3/4. Functionally, catalyzes the NADPH-dependent reduction of N-acetyl-5-glutamyl phosphate to yield N-acetyl-L-glutamate 5-semialdehyde. The polypeptide is N-acetyl-gamma-glutamyl-phosphate reductase (Shewanella sp. (strain MR-4)).